Reading from the N-terminus, the 241-residue chain is MIDLTGKTSLITGASGGIGGAIARLLHKLGSHVIISGSNEEKLKSLGNVLKDNYTIEICNLANKEECSNLISKAPKLDILVCNAGITSDTLAIRMKDEDFDKVIDINLKANFILNREAIKKMMQNRYGRIINISSIVGISGNPGQANYCASKAGLIGMTKSLSYEVATRGITVNAVAPGFIKSDMTDKLNEKQREAIVQKIPLGTYGMPEDVANAVAFLASDQASYITGQTIHVNGGMLMV.

NADP(+) contacts are provided by residues 13 to 16 (GASG), Ser-38, 57 to 58 (EI), and Asn-83. A substrate-binding site is contributed by Ser-135. Tyr-148 serves as the catalytic Proton acceptor. NADP(+) contacts are provided by residues 148–152 (YCASK) and Ile-181.

Belongs to the short-chain dehydrogenases/reductases (SDR) family. Homotetramer.

The enzyme catalyses a (3R)-hydroxyacyl-[ACP] + NADP(+) = a 3-oxoacyl-[ACP] + NADPH + H(+). It functions in the pathway lipid metabolism; fatty acid biosynthesis. Its function is as follows. Catalyzes the NADPH-dependent reduction of beta-ketoacyl-ACP substrates to beta-hydroxyacyl-ACP products, the first reductive step in the elongation cycle of fatty acid biosynthesis. In Rickettsia felis (strain ATCC VR-1525 / URRWXCal2) (Rickettsia azadi), this protein is 3-oxoacyl-[acyl-carrier-protein] reductase FabG (fabG).